A 142-amino-acid polypeptide reads, in one-letter code: Small ribosomal subunit protein uS12 (142 aa).

The protein belongs to the universal ribosomal protein uS12 family. Part of the 30S ribosomal subunit.

In terms of biological role, with S4 and S5 plays an important role in translational accuracy. Located at the interface of the 30S and 50S subunits. In Methanosarcina mazei (strain ATCC BAA-159 / DSM 3647 / Goe1 / Go1 / JCM 11833 / OCM 88) (Methanosarcina frisia), this protein is Small ribosomal subunit protein uS12.